We begin with the raw amino-acid sequence, 407 residues long: Probable NADPH dehydrogenase (407 aa).

FMN contacts are provided by threonine 49 and glutamine 124. Histidine 201–histidine 204 provides a ligand contact to substrate. Catalysis depends on tyrosine 206, which acts as the Proton donor. FMN-binding residues include arginine 254 and arginine 357.

It belongs to the NADH:flavin oxidoreductase/NADH oxidase family. The cofactor is FMN.

It carries out the reaction A + NADPH + H(+) = AH2 + NADP(+). Its function is as follows. Oxidoreductase that binds mammalian estrogens with high affinity. The chain is Probable NADPH dehydrogenase from Candida albicans (Yeast).